We begin with the raw amino-acid sequence, 349 residues long: Fe(3+) ions import ATP-binding protein FbpC (349 aa).

Positions 4–236 constitute an ABC transporter domain; the sequence is LELHHIGKSY…PVDEPTATFL (233 aa). 36–43 contacts ATP; that stretch reads GPSGSGKT.

Belongs to the ABC transporter superfamily. Fe(3+) ion importer (TC 3.A.1.10) family. As to quaternary structure, the complex is composed of two ATP-binding proteins (FbpC), two transmembrane proteins (FbpB) and a solute-binding protein (FbpA).

It localises to the cell inner membrane. It catalyses the reaction Fe(3+)(out) + ATP + H2O = Fe(3+)(in) + ADP + phosphate + H(+). Part of the ABC transporter complex FbpABC involved in Fe(3+) ions import. Responsible for energy coupling to the transport system. This Yersinia pestis bv. Antiqua (strain Antiqua) protein is Fe(3+) ions import ATP-binding protein FbpC.